The chain runs to 355 residues: tRNA pseudouridine synthase D (355 aa).

The active-site Nucleophile is aspartate 84. Residues 160-306 (GVPNYFGLQR…MAHERRILRL (147 aa)) form the TRUD domain.

This sequence belongs to the pseudouridine synthase TruD family.

The enzyme catalyses uridine(13) in tRNA = pseudouridine(13) in tRNA. Functionally, responsible for synthesis of pseudouridine from uracil-13 in transfer RNAs. The sequence is that of tRNA pseudouridine synthase D from Pseudomonas aeruginosa (strain UCBPP-PA14).